The following is a 177-amino-acid chain: Adenine phosphoribosyltransferase (177 aa).

Belongs to the purine/pyrimidine phosphoribosyltransferase family. In terms of assembly, homodimer.

It localises to the cytoplasm. The enzyme catalyses AMP + diphosphate = 5-phospho-alpha-D-ribose 1-diphosphate + adenine. It participates in purine metabolism; AMP biosynthesis via salvage pathway; AMP from adenine: step 1/1. Its function is as follows. Catalyzes a salvage reaction resulting in the formation of AMP, that is energically less costly than de novo synthesis. This is Adenine phosphoribosyltransferase from Leptospira biflexa serovar Patoc (strain Patoc 1 / Ames).